The primary structure comprises 87 residues: RNA-binding protein Hfq (87 aa).

One can recognise a Sm domain in the interval 9–68 (DPFLNALRRERIPVSIYLVNGIKLQGQIESFDQFVILLKNTVSQMVYKHAISTVVPARAV).

This sequence belongs to the Hfq family. Homohexamer.

Functionally, RNA chaperone that binds small regulatory RNA (sRNAs) and mRNAs to facilitate mRNA translational regulation in response to envelope stress, environmental stress and changes in metabolite concentrations. Also binds with high specificity to tRNAs. The polypeptide is RNA-binding protein Hfq (Aeromonas salmonicida (strain A449)).